The following is a 475-amino-acid chain: Aspartyl/glutamyl-tRNA(Asn/Gln) amidotransferase subunit B (475 aa).

The protein belongs to the GatB/GatE family. GatB subfamily. As to quaternary structure, heterotrimer of A, B and C subunits.

The catalysed reaction is L-glutamyl-tRNA(Gln) + L-glutamine + ATP + H2O = L-glutaminyl-tRNA(Gln) + L-glutamate + ADP + phosphate + H(+). The enzyme catalyses L-aspartyl-tRNA(Asn) + L-glutamine + ATP + H2O = L-asparaginyl-tRNA(Asn) + L-glutamate + ADP + phosphate + 2 H(+). In terms of biological role, allows the formation of correctly charged Asn-tRNA(Asn) or Gln-tRNA(Gln) through the transamidation of misacylated Asp-tRNA(Asn) or Glu-tRNA(Gln) in organisms which lack either or both of asparaginyl-tRNA or glutaminyl-tRNA synthetases. The reaction takes place in the presence of glutamine and ATP through an activated phospho-Asp-tRNA(Asn) or phospho-Glu-tRNA(Gln). This chain is Aspartyl/glutamyl-tRNA(Asn/Gln) amidotransferase subunit B, found in Chlorobium luteolum (strain DSM 273 / BCRC 81028 / 2530) (Pelodictyon luteolum).